Consider the following 511-residue polypeptide: Lysine--tRNA ligase (511 aa).

Residues Glu421 and Glu428 each contribute to the Mg(2+) site.

Belongs to the class-II aminoacyl-tRNA synthetase family. In terms of assembly, homodimer. It depends on Mg(2+) as a cofactor.

The protein localises to the cytoplasm. It catalyses the reaction tRNA(Lys) + L-lysine + ATP = L-lysyl-tRNA(Lys) + AMP + diphosphate. The sequence is that of Lysine--tRNA ligase from Janthinobacterium sp. (strain Marseille) (Minibacterium massiliensis).